Here is a 174-residue protein sequence, read N- to C-terminus: Squamosa promoter-binding-like protein 4 (174 aa).

The disordered stretch occupies residues 1–42 (MEGKRSQGQGYMKKKSYLVEEDMETDTDEEEEVGRDRVRGSR). Residues 19-33 (VEEDMETDTDEEEEV) show a composition bias toward acidic residues. An SBP-type zinc finger spans residues 51-128 (LRLCQVDRCT…AGHNERRRKS (78 aa)). Zn(2+)-binding residues include Cys54, Cys59, Cys76, His79, Cys95, Cys98, His102, and Cys114. The short motif at 111–127 (KRSCRRRLAGHNERRRK) is the Bipartite nuclear localization signal element. A compositionally biased stretch (basic residues) spans 118-127 (LAGHNERRRK). Disordered regions lie at residues 118-148 (LAGHNERRRKSSGESTYGEGSGRRGINGQVV) and 155-174 (SRVEMTLPMPNSSFKRPQIR). The span at 163–174 (MPNSSFKRPQIR) shows a compositional bias: polar residues.

Requires Zn(2+) as cofactor. As to expression, expressed in the rib meristem and inter-primordial tissue of the inflorescence apex.

Its subcellular location is the nucleus. It localises to the cytoplasm. Trans-acting factor that binds specifically to the consensus nucleotide sequence 5'-TNCGTACAA-3' of AP1 promoter. Promotes both vegetative phase change and flowering. This Arabidopsis thaliana (Mouse-ear cress) protein is Squamosa promoter-binding-like protein 4 (SPL4).